The primary structure comprises 167 residues: Histidinol dehydrogenase (167 aa).

Glutamine 109 and histidine 112 together coordinate Zn(2+).

The protein belongs to the histidinol dehydrogenase family. In terms of assembly, homodimer. Zn(2+) is required as a cofactor.

It catalyses the reaction L-histidinol + 2 NAD(+) + H2O = L-histidine + 2 NADH + 3 H(+). The protein operates within amino-acid biosynthesis; L-histidine biosynthesis; L-histidine from 5-phospho-alpha-D-ribose 1-diphosphate: step 9/9. Functionally, catalyzes the sequential NAD-dependent oxidations of L-histidinol to L-histidinaldehyde and then to L-histidine. The sequence is that of Histidinol dehydrogenase (hisD) from Salmonella enteritidis.